A 512-amino-acid polypeptide reads, in one-letter code: Sodium/proline symporter (512 aa).

13 consecutive transmembrane segments (helical) span residues 16–36 (WQTY…GFYG), 54–74 (IGPY…WMIM), 85–105 (LSAM…YFVV), 139–159 (IISG…GFVS), 174–194 (FGLI…GYLA), 200–220 (FFQG…AMMN), 240–260 (LFKG…LGYF), 286–306 (ISWM…GIAF), 327–347 (VLFH…AIMS), 381–401 (FVMI…AIAW), 410–430 (LVGN…LFAL), 438–458 (AGAV…IAWI), and 467–487 (IFGL…TYVV).

The protein belongs to the sodium:solute symporter (SSF) (TC 2.A.21) family.

It is found in the cell membrane. The catalysed reaction is L-proline(in) + Na(+)(in) = L-proline(out) + Na(+)(out). In terms of biological role, catalyzes the sodium-dependent uptake of extracellular L-proline. Since most S.aureus strains are L-proline auxotrophs, this transporter may aid the bacterial persistence during an infection of tissues with low proline concentrations. The polypeptide is Sodium/proline symporter (putP) (Staphylococcus aureus (strain bovine RF122 / ET3-1)).